The sequence spans 193 residues: Interleukin-18 (193 aa).

Residues 1–36 (MAAEQVEDYCISFVEMKFINNTLYFVAENDEDLESD) constitute a propeptide that is removed on maturation.

The protein belongs to the IL-1 family. As to quaternary structure, forms a ternary complex with ligand-binding receptor subunit IL18R1 and signaling receptor subunit IL18RAP at the plasma membrane. Mature IL18 first binds to IL18R1 forming a low affinity binary complex, which then interacts with IL18RAP to form a high affinity ternary complex that signals inside the cell. Interacts with cargo receptor TMED10; the interaction mediates the translocation from the cytoplasm into the ERGIC (endoplasmic reticulum-Golgi intermediate compartment) and thereby secretion. The pro-IL-18 precursor is processed by CASP1, CASP4 or CASP5 to yield its mature, active form. The pro-IL-18 precursor features autoinhibitory interactions between the propeptide and the post-cleavage-site region, preventing recognition by the IL18R1 receptor. Processing by CASP1, CASP4 or CASP5 induces conformational changes to generate critical receptor-binding sites. The mature form is then secreted and released in the extracellular milieu by passing through the gasdermin-D (GSDMD) pore. In contrast, cleavage by CASP3 inactivates IL18.

It is found in the cytoplasm. The protein resides in the cytosol. It localises to the secreted. Pro-inflammatory cytokine primarily involved in epithelial barrier repair, polarized T-helper 1 (Th1) cell and natural killer (NK) cell immune responses. Upon binding to IL18R1 and IL18RAP, forms a signaling ternary complex which activates NF-kappa-B, triggering synthesis of inflammatory mediators. Synergizes with IL12/interleukin-12 to induce IFNG synthesis from T-helper 1 (Th1) cells and natural killer (NK) cells. Involved in transduction of inflammation downstream of pyroptosis: its mature form is specifically released in the extracellular milieu by passing through the gasdermin-D (GSDMD) pore. In Bos taurus (Bovine), this protein is Interleukin-18 (IL18).